Here is a 353-residue protein sequence, read N- to C-terminus: Photosystem II protein D1 (353 aa).

Position 2 is an N-acetylthreonine (Thr2). Thr2 is modified (phosphothreonine). Helical transmembrane passes span 29–46 (YIGW…TATA), 118–133 (HFLL…EWEL), and 142–156 (WIAV…AAAA). Residue His118 coordinates chlorophyll a. Tyr126 lines the pheophytin a pocket. Residues Asp170 and Glu189 each contribute to the [CaMn4O5] cluster site. The helical transmembrane segment at 197-218 (FHMLGVAGVFGGSLFSAMHGSL) threads the bilayer. Chlorophyll a is bound at residue His198. Residues His215 and 264-265 (SF) each bind a quinone. Residue His215 coordinates Fe cation. His272 lines the Fe cation pocket. The helical transmembrane segment at 274 to 288 (FLAAWPVVGIWFTAL) threads the bilayer. 4 residues coordinate [CaMn4O5] cluster: His332, Glu333, Asp342, and Ala344. A propeptide spanning residues 345–353 (SVEAPSVNG) is cleaved from the precursor.

It belongs to the reaction center PufL/M/PsbA/D family. PSII is composed of 1 copy each of membrane proteins PsbA, PsbB, PsbC, PsbD, PsbE, PsbF, PsbH, PsbI, PsbJ, PsbK, PsbL, PsbM, PsbT, PsbX, PsbY, PsbZ, Psb30/Ycf12, at least 3 peripheral proteins of the oxygen-evolving complex and a large number of cofactors. It forms dimeric complexes. Requires The D1/D2 heterodimer binds P680, chlorophylls that are the primary electron donor of PSII, and subsequent electron acceptors. It shares a non-heme iron and each subunit binds pheophytin, quinone, additional chlorophylls, carotenoids and lipids. D1 provides most of the ligands for the Mn4-Ca-O5 cluster of the oxygen-evolving complex (OEC). There is also a Cl(-1) ion associated with D1 and D2, which is required for oxygen evolution. The PSII complex binds additional chlorophylls, carotenoids and specific lipids. as cofactor. Tyr-161 forms a radical intermediate that is referred to as redox-active TyrZ, YZ or Y-Z. Post-translationally, C-terminally processed by CTPA; processing is essential to allow assembly of the oxygen-evolving complex and thus photosynthetic growth.

The protein resides in the plastid. Its subcellular location is the chloroplast thylakoid membrane. The enzyme catalyses 2 a plastoquinone + 4 hnu + 2 H2O = 2 a plastoquinol + O2. In terms of biological role, photosystem II (PSII) is a light-driven water:plastoquinone oxidoreductase that uses light energy to abstract electrons from H(2)O, generating O(2) and a proton gradient subsequently used for ATP formation. It consists of a core antenna complex that captures photons, and an electron transfer chain that converts photonic excitation into a charge separation. The D1/D2 (PsbA/PsbD) reaction center heterodimer binds P680, the primary electron donor of PSII as well as several subsequent electron acceptors. In Huperzia lucidula (Shining clubmoss), this protein is Photosystem II protein D1.